The chain runs to 100 residues: UPF0473 protein Csac_1599 (100 aa).

The protein belongs to the UPF0473 family.

This Caldicellulosiruptor saccharolyticus (strain ATCC 43494 / DSM 8903 / Tp8T 6331) protein is UPF0473 protein Csac_1599.